The sequence spans 107 residues: Replication protein A 14 kDa subunit A (107 aa).

At M1 the chain carries N-acetylmethionine.

This sequence belongs to the replication factor A protein 3 family. Component of the heterotrimeric canonical replication protein A complex (RPA).

It localises to the nucleus. As part of the replication protein A (RPA/RP-A), a single-stranded DNA-binding heterotrimeric complex, may play an essential role in DNA replication, recombination and repair. Binds and stabilizes single-stranded DNA intermediates, preventing complementary DNA reannealing and recruiting different proteins involved in DNA metabolism. The chain is Replication protein A 14 kDa subunit A (RPA3A) from Arabidopsis thaliana (Mouse-ear cress).